A 237-amino-acid chain; its full sequence is Putative ATP-binding protein BMEII0108 (237 aa).

In terms of domain architecture, ABC transporter spans 5-205 (ISFNNVVMRY…DLPYPRTEAI (201 aa)). Position 37-44 (37-44 (GPSGCGKS)) interacts with ATP.

Belongs to the ABC transporter superfamily. The complex is composed of two ATP-binding proteins (BMEII0108), two transmembrane proteins (BMEII0107) and a solute-binding protein (BMEII0109).

The protein resides in the cell inner membrane. Probably part of an ABC transporter complex. Probably Responsible for energy coupling to the transport system. This chain is Putative ATP-binding protein BMEII0108, found in Brucella melitensis biotype 1 (strain ATCC 23456 / CCUG 17765 / NCTC 10094 / 16M).